A 670-amino-acid chain; its full sequence is Amyloid beta A4 precursor protein-binding family B member 1-interacting protein (670 aa).

Ser-55 carries the post-translational modification Phosphoserine. One can recognise a Ras-associating domain in the interval 179–266 (KKLVVKVHMD…KVLFLEKEER (88 aa)). Residues 313-422 (VPELEGALYL…WVMGIRIAKY (110 aa)) enclose the PH domain. A disordered region spans residues 449–653 (VGTPMPAQPS…PGAPGNSEQD (205 aa)). Residues 456 to 475 (QPSTVSSGLKTGTSQPNGQM) are compositionally biased toward polar residues. Ser-532 carries the phosphoserine modification. Position 534 is a phosphothreonine (Thr-534). Residue Ser-537 is modified to Phosphoserine. 4 stretches are compositionally biased toward pro residues: residues 553–567 (PHPP…PPPP), 576–599 (LPPP…PPPA), 606–615 (LPPPPPPPPC), and 625–634 (PLPPKKPLVP).

The protein belongs to the MRL family. In terms of assembly, interacts, through the N-terminal Pro-rich region, with the WW domain of APBB1. Interacts with RAP1A, PFN1, VASP and ENAH. In terms of tissue distribution, ubiquitously expressed with high expression in the hematopoietic system.

The protein localises to the cell membrane. The protein resides in the cell projection. Its subcellular location is the lamellipodium. It localises to the cell junction. It is found in the focal adhesion. The protein localises to the cytoplasm. The protein resides in the cytoskeleton. Its function is as follows. Appears to function in the signal transduction from Ras activation to actin cytoskeletal remodeling. Suppresses insulin-induced promoter activities through AP1 and SRE. Mediates Rap1-induced adhesion. The protein is Amyloid beta A4 precursor protein-binding family B member 1-interacting protein (Apbb1ip) of Mus musculus (Mouse).